The chain runs to 450 residues: 23S rRNA (uracil(1939)-C(5))-methyltransferase RlmD (450 aa).

The TRAM domain occupies 12-70 (SKQLSAKLSLSVNQLDHLGAGIAQHQGKVVFIPGALPDETVTVQFTEQKKNYARAKLIK). [4Fe-4S] cluster-binding residues include cysteine 83, cysteine 89, cysteine 92, and cysteine 171. S-adenosyl-L-methionine is bound by residues glutamine 283, phenylalanine 312, asparagine 317, glutamate 333, aspartate 360, and aspartate 380. Cysteine 406 acts as the Nucleophile in catalysis.

This sequence belongs to the class I-like SAM-binding methyltransferase superfamily. RNA M5U methyltransferase family. RlmD subfamily.

It carries out the reaction uridine(1939) in 23S rRNA + S-adenosyl-L-methionine = 5-methyluridine(1939) in 23S rRNA + S-adenosyl-L-homocysteine + H(+). In terms of biological role, catalyzes the formation of 5-methyl-uridine at position 1939 (m5U1939) in 23S rRNA. In Shewanella baltica (strain OS155 / ATCC BAA-1091), this protein is 23S rRNA (uracil(1939)-C(5))-methyltransferase RlmD.